The following is a 295-amino-acid chain: MTSGRAMSPEETAPYGTGPARAESAPDAPAPIKRIRTHHLREMKQRGEKFAMLTAYEQYAAQTFDEAGIEVLLVGDSASNNVFANETSLPVTVDELIPLARAVSRSVRRALVVADLPFGSYQASPEQAYLTAVRFMKEANAHAVKLEGGIEMAPQVRKLTEGGIPVMAHIGFTPQSEHNLGGYRVQGRGEAAARVVAEAVAMEQAGAFAVVMEMVPGDVAAEVTKSVSIPTIGIGAGLDCDGQVLVWQDAFGLRTGRMPRFVKQYADLHGVLLQAARDYAADVKAGTFPGPEHTF.

The interval 1–30 (MTSGRAMSPEETAPYGTGPARAESAPDAPA) is disordered. Mg(2+)-binding residues include D76 and D115. 3-methyl-2-oxobutanoate is bound by residues 76–77 (DS), D115, and K145. E147 is a binding site for Mg(2+). Catalysis depends on E213, which acts as the Proton acceptor.

The protein belongs to the PanB family. As to quaternary structure, homodecamer; pentamer of dimers. The cofactor is Mg(2+).

The protein resides in the cytoplasm. It catalyses the reaction 3-methyl-2-oxobutanoate + (6R)-5,10-methylene-5,6,7,8-tetrahydrofolate + H2O = 2-dehydropantoate + (6S)-5,6,7,8-tetrahydrofolate. It functions in the pathway cofactor biosynthesis; (R)-pantothenate biosynthesis; (R)-pantoate from 3-methyl-2-oxobutanoate: step 1/2. Functionally, catalyzes the reversible reaction in which hydroxymethyl group from 5,10-methylenetetrahydrofolate is transferred onto alpha-ketoisovalerate to form ketopantoate. The sequence is that of 3-methyl-2-oxobutanoate hydroxymethyltransferase from Nocardioides sp. (strain ATCC BAA-499 / JS614).